Here is a 657-residue protein sequence, read N- to C-terminus: MSDHKESTGAIALTLPDRSVRNVAMGSTGYDVALSIGRKLAQDALAIKLNGVVCDLNTLINSDAAIEIITFTSPEGPEIFWHSSSHLMAQAIEELFAGSKFGAGPAIEQGFYYDVSSEHRFREEDLRAIEARMLEISKRDSSVQRQEMSREEAIAFFTSVRNDPYKVEILTETLKNVERVSLYHQGDFTDLCTGPHLPSTGKIKAVLLTNISASYWRGDSNREQMQRIYGITFPSEKLLKEHVARIEEAKRRDHRKLGAELELFLLSPEVGSGLPMWLPKGAIIRSELESFLREEQRKRGYVPVYTPHIGNIELYKRSGHYPYYSDSQFPPLTYHDEDGKQEQYLLKPMNCPHHHLIYSSKMRSYRDLPLRFTEFGTVYRHEQSGELNGLARARGFTQDDSHIYCRPDQLVDEICSAIELTQFVFKTLGFAEVQTRLSLHDPANQAKYGGTAEVWEQAEKDVQEAAERMGVDYFIGIGEASFYGPKIDFIVRDAIGRKWQLGTVQVDYVMPERFDLTYVGSDGQKHRPVVIHRAPFGSMERFIGLLIEHTAGNFPLWLAPVQVAVLPIAEENHDYATTVYRRLLAAGIRAELDTRSEKINRKIRDAEMSKTPCMLVIGQKEQANGEVSLRRHRQGDAGRFATDELIETLKQEIANRQ.

The 70-residue stretch at 1–70 folds into the TGS domain; that stretch reads MSDHKESTGA…NSDAAIEIIT (70 aa). The interval 253-555 is catalytic; the sequence is DHRKLGAELE…LIEHTAGNFP (303 aa). Cys351, His402, and His532 together coordinate Zn(2+).

Belongs to the class-II aminoacyl-tRNA synthetase family. As to quaternary structure, homodimer. Zn(2+) serves as cofactor.

The protein localises to the cytoplasm. It carries out the reaction tRNA(Thr) + L-threonine + ATP = L-threonyl-tRNA(Thr) + AMP + diphosphate + H(+). Functionally, catalyzes the attachment of threonine to tRNA(Thr) in a two-step reaction: L-threonine is first activated by ATP to form Thr-AMP and then transferred to the acceptor end of tRNA(Thr). Also edits incorrectly charged L-seryl-tRNA(Thr). The protein is Threonine--tRNA ligase of Chlorobium chlorochromatii (strain CaD3).